Consider the following 130-residue polypeptide: Small ribosomal subunit protein uS8 (130 aa).

This sequence belongs to the universal ribosomal protein uS8 family.

This chain is Small ribosomal subunit protein uS8 (RPS15A), found in Strongylocentrotus purpuratus (Purple sea urchin).